The primary structure comprises 183 residues: Beta-defensin 129 (183 aa).

The N-terminal stretch at 1–19 is a signal peptide; that stretch reads MKLLFPIFASLMLQYQVNT. Intrachain disulfides connect cysteine 27-cysteine 53, cysteine 34-cysteine 48, and cysteine 38-cysteine 54. Residues 142–183 are disordered; it reads ATSAKSNTKESGDSATASPPPAPPPPNILPTPSLELEEAEEQ. Residues 159–170 are compositionally biased toward pro residues; the sequence is SPPPAPPPPNIL.

It belongs to the beta-defensin family.

It is found in the secreted. Has antibacterial activity. The protein is Beta-defensin 129 (DEFB129) of Macaca fascicularis (Crab-eating macaque).